A 535-amino-acid chain; its full sequence is MAYLLREGTQRSTGNEVILNNIAVAKILLEMLKSSLGPKGLDKMLVEGQDITITNDGATIVKNMEVQHPTAKLLIETAKTVDTEVGDGTTSVVVLAGLLLEKAEDLLNQKIHPTVIIEGYRKALSSSLELLKSIADKISPEDRKIVHDLVYTTLSSKFFSTEHTLEKIINLVIEASLAVLDKRDGTYDLDIKNIKIVKVNGGEFDDSELVNGIVVDKEPTNENMPKRAENVKVMLADFPLKLEKTEISMKLGISDPTQIKGYLDEQTAYVKQMVDKIKAMGVKLFITQKDIDEVASYLMGKSGIIALKNVKRSDIELLSRATGAKIASSMKDANESDLGEAKLVEVRNLGKNKYLFIQSDKAKAVTVIIKGSNNMVTDEAERSLNDAFNSIRNLLLEPYIVAGGGAVEEELAKRLRENAGKVPGKEQLAFNAFADALEEYVSILSETAGMDPISALTEIRHKHANGLKNAGIDIVKARIYDNMLELKVIDSLKVKEQVLKSATEAATAILKIDDMIAAAPAKQQPQPQQPNPYLG.

The protein belongs to the TCP-1 chaperonin family. In terms of assembly, forms a heterooligomeric complex of two stacked nine-membered rings; one of alpha and the other of beta subunits.

It localises to the cytoplasm. It catalyses the reaction ATP + H2O = ADP + phosphate + H(+). In terms of biological role, molecular chaperone; binds unfolded polypeptides in vitro, and has a weak ATPase activity. In Saccharolobus shibatae (strain ATCC 51178 / DSM 5389 / JCM 8931 / NBRC 15437 / B12) (Sulfolobus shibatae), this protein is Thermosome subunit gamma (thsC).